Here is a 204-residue protein sequence, read N- to C-terminus: Lymphotoxin-alpha (204 aa).

The N-terminal stretch at 1–33 (MTPPGRLYLLRVRSAPVLLLLGLLLGLPPGAQG) is a signal peptide. In terms of domain architecture, THD spans 62–204 (PAAHLIGDPS…SSVFFGAFAL (143 aa)). An N-linked (GlcNAc...) asparagine glycan is attached at Asn95. An intrachain disulfide couples Cys119 to Cys155.

It belongs to the tumor necrosis factor family. Homotrimer, and heterotrimer of either two LTB and one LTA subunits or (less prevalent) two LTA and one LTB subunits. Interacts with TNFRSF14.

The protein localises to the secreted. It localises to the membrane. In terms of biological role, cytokine that in its homotrimeric form binds to TNFRSF1A/TNFR1, TNFRSF1B/TNFBR and TNFRSF14/HVEM. In its heterotrimeric form with LTB binds to TNFRSF3/LTBR. Lymphotoxin is produced by lymphocytes and is cytotoxic for a wide range of tumor cells in vitro and in vivo. The protein is Lymphotoxin-alpha (LTA) of Canis lupus familiaris (Dog).